The chain runs to 318 residues: NADH-ubiquinone oxidoreductase chain 1 (318 aa).

Transmembrane regions (helical) follow at residues 2–22 (FLMN…FLTL), 68–88 (ISLF…MWIP), 102–122 (ILFI…SGWA), 146–166 (LAII…SSLI), 171–191 (FTWL…STLA), 217–237 (AGPF…MNAL), 253–273 (EMFT…FLWI), and 294–314 (LPLT…MACI).

It belongs to the complex I subunit 1 family.

Its subcellular location is the mitochondrion inner membrane. It catalyses the reaction a ubiquinone + NADH + 5 H(+)(in) = a ubiquinol + NAD(+) + 4 H(+)(out). Core subunit of the mitochondrial membrane respiratory chain NADH dehydrogenase (Complex I) that is believed to belong to the minimal assembly required for catalysis. Complex I functions in the transfer of electrons from NADH to the respiratory chain. The immediate electron acceptor for the enzyme is believed to be ubiquinone. The sequence is that of NADH-ubiquinone oxidoreductase chain 1 (MT-ND1) from Tamias sibiricus (Siberian chipmunk).